The chain runs to 2005 residues: Chitin synthase 8 (2005 aa).

The Myosin motor domain occupies 5-773 (DEVAKLSQLT…AFRELEDELR (769 aa)). Residue 108-115 (GDTSSGKS) participates in ATP binding. Residues Asn-164, Asn-364, Asn-390, and Asn-546 are each glycosylated (N-linked (GlcNAc...) asparagine). Residues 585-631 (QSVKPMRAPSTRRPNRGNTIKRTNTIKKADDDDSDEDAADAADASTS) form a disordered region. Positions 615-624 (DDDSDEDAAD) are enriched in acidic residues. The segment at 647–669 (LDLLLETLEDTKTWFTLCLRPND) is actin-binding. The next 2 membrane-spanning stretches (helical) occupy residues 929-949 (KWVA…LSRF) and 965-985 (LAIN…IVVL). Asn-1076 is a glycosylation site (N-linked (GlcNAc...) asparagine). 3 helical membrane passes run 1232-1252 (ILLA…LAAL), 1604-1624 (LIFT…IVFI), and 1626-1646 (LLST…IVLV). N-linked (GlcNAc...) asparagine glycosylation occurs at Asn-1650. Transmembrane regions (helical) follow at residues 1653–1673 (VPLT…VIFL) and 1680–1700 (MIGW…FLPL). N-linked (GlcNAc...) asparagine glycosylation is found at Asn-1770 and Asn-1794. The tract at residues 1796–1821 (SFGHSPSPSYGGTPSQFGAFAPGPGS) is disordered. Over residues 1797–1811 (FGHSPSPSYGGTPSQ) the composition is skewed to polar residues. A glycan (N-linked (GlcNAc...) asparagine) is linked at Asn-1882. Residues 1912–1950 (FATAEQQQQQQQQQQAAGLSGSGGSKSPPREAVAGGLPS) form a disordered region. Low complexity predominate over residues 1917 to 1930 (QQQQQQQQQQAAGL). The region spanning 1948-2003 (LPSDSQIKLDIRSLIAESDLTTITKKQLRAKLEQKYATSIESKKAFINSEIENVLS) is the DEK-C domain.

The protein in the N-terminal section; belongs to the TRAFAC class myosin-kinesin ATPase superfamily. Myosin family. It in the C-terminal section; belongs to the chitin synthase family. Class V subfamily.

Its subcellular location is the cell membrane. It localises to the cytoplasmic vesicle membrane. It is found in the cell tip. It catalyses the reaction [(1-&gt;4)-N-acetyl-beta-D-glucosaminyl](n) + UDP-N-acetyl-alpha-D-glucosamine = [(1-&gt;4)-N-acetyl-beta-D-glucosaminyl](n+1) + UDP + H(+). Its function is as follows. Polymerizes chitin, a structural polymer of the cell wall and septum, by transferring the sugar moiety of UDP-GlcNAc to the non-reducing end of the growing chitin polymer. Involved in mating tube and dikaryotic hyphae formation and required for the formation of invading hyphae during plant infection. In Mycosarcoma maydis (Corn smut fungus), this protein is Chitin synthase 8.